The chain runs to 385 residues: Protein-glutamate methylesterase/protein-glutamine glutaminase (385 aa).

A 4-aspartylphosphate modification is found at D53. Residues 196-385 (KHKTGKIIVV…EIADHVLRRS (190 aa)) enclose the CheB-type methylesterase domain. Active-site residues include S208, H234, and D330.

The protein belongs to the CheB family. In terms of processing, phosphorylated by CheA. Phosphorylation of the N-terminal regulatory domain activates the methylesterase activity.

The protein localises to the cytoplasm. It carries out the reaction [protein]-L-glutamate 5-O-methyl ester + H2O = L-glutamyl-[protein] + methanol + H(+). The enzyme catalyses L-glutaminyl-[protein] + H2O = L-glutamyl-[protein] + NH4(+). Involved in chemotaxis. Part of a chemotaxis signal transduction system that modulates chemotaxis in response to various stimuli. Catalyzes the demethylation of specific methylglutamate residues introduced into the chemoreceptors (methyl-accepting chemotaxis proteins or MCP) by CheR. Also mediates the irreversible deamidation of specific glutamine residues to glutamic acid. This is Protein-glutamate methylesterase/protein-glutamine glutaminase from Borreliella burgdorferi (strain ATCC 35210 / DSM 4680 / CIP 102532 / B31) (Borrelia burgdorferi).